A 243-amino-acid polypeptide reads, in one-letter code: UPF0246 protein M28_Spy1772 (243 aa).

This sequence belongs to the UPF0246 family.

This is UPF0246 protein M28_Spy1772 from Streptococcus pyogenes serotype M28 (strain MGAS6180).